Here is a 389-residue protein sequence, read N- to C-terminus: Lipid-A-disaccharide synthase (389 aa).

The protein belongs to the LpxB family.

It carries out the reaction a lipid X + a UDP-2-N,3-O-bis[(3R)-3-hydroxyacyl]-alpha-D-glucosamine = a lipid A disaccharide + UDP + H(+). Its pathway is bacterial outer membrane biogenesis; LPS lipid A biosynthesis. Its function is as follows. Condensation of UDP-2,3-diacylglucosamine and 2,3-diacylglucosamine-1-phosphate to form lipid A disaccharide, a precursor of lipid A, a phosphorylated glycolipid that anchors the lipopolysaccharide to the outer membrane of the cell. This chain is Lipid-A-disaccharide synthase, found in Burkholderia vietnamiensis (strain G4 / LMG 22486) (Burkholderia cepacia (strain R1808)).